The sequence spans 450 residues: Chromosomal replication initiator protein DnaA (450 aa).

A domain I, interacts with DnaA modulators region spans residues 1 to 77; the sequence is MTENEQIFWN…EVYNAQIAVD (77 aa). Residues 77-109 are domain II; sequence DYVYEDDLMIEQQHQGQQGYTEQAFQQLPAVQS. Positions 110–328 are domain III, AAA+ region; sequence DLNPKYSFDN…GALKDISLVA (219 aa). ATP-binding residues include glycine 154, glycine 156, lysine 157, and threonine 158. The segment at 329 to 450 is domain IV, binds dsDNA; it reads NFKQIDTITV…EIETIKNKIK (122 aa).

This sequence belongs to the DnaA family. In terms of assembly, oligomerizes as a right-handed, spiral filament on DNA at oriC.

The protein resides in the cytoplasm. Functionally, plays an essential role in the initiation and regulation of chromosomal replication. ATP-DnaA binds to the origin of replication (oriC) to initiate formation of the DNA replication initiation complex once per cell cycle. Binds the DnaA box (a 9 base pair repeat at the origin) and separates the double-stranded (ds)DNA. Forms a right-handed helical filament on oriC DNA; dsDNA binds to the exterior of the filament while single-stranded (ss)DNA is stabiized in the filament's interior. The ATP-DnaA-oriC complex binds and stabilizes one strand of the AT-rich DNA unwinding element (DUE), permitting loading of DNA polymerase. After initiation quickly degrades to an ADP-DnaA complex that is not apt for DNA replication. Binds acidic phospholipids. The chain is Chromosomal replication initiator protein DnaA from Streptococcus equi subsp. equi (strain 4047).